The chain runs to 179 residues: Large ribosomal subunit protein uL5 (179 aa).

The protein belongs to the universal ribosomal protein uL5 family. As to quaternary structure, part of the 50S ribosomal subunit; part of the 5S rRNA/L5/L18/L25 subcomplex. Contacts the 5S rRNA and the P site tRNA. Forms a bridge to the 30S subunit in the 70S ribosome.

This is one of the proteins that bind and probably mediate the attachment of the 5S RNA into the large ribosomal subunit, where it forms part of the central protuberance. In the 70S ribosome it contacts protein S13 of the 30S subunit (bridge B1b), connecting the 2 subunits; this bridge is implicated in subunit movement. Contacts the P site tRNA; the 5S rRNA and some of its associated proteins might help stabilize positioning of ribosome-bound tRNAs. The chain is Large ribosomal subunit protein uL5 from Neisseria meningitidis serogroup C (strain 053442).